The sequence spans 288 residues: Elongation factor Ts (288 aa).

Positions 82 to 85 (TDFV) are involved in Mg(2+) ion dislocation from EF-Tu.

Belongs to the EF-Ts family.

The protein resides in the cytoplasm. In terms of biological role, associates with the EF-Tu.GDP complex and induces the exchange of GDP to GTP. It remains bound to the aminoacyl-tRNA.EF-Tu.GTP complex up to the GTP hydrolysis stage on the ribosome. The polypeptide is Elongation factor Ts (Chlorobium phaeobacteroides (strain BS1)).